The primary structure comprises 296 residues: Ribosomal protein L11 methyltransferase (296 aa).

4 residues coordinate S-adenosyl-L-methionine: Thr-151, Gly-172, Asp-194, and Asn-233.

The protein belongs to the methyltransferase superfamily. PrmA family.

It is found in the cytoplasm. It carries out the reaction L-lysyl-[protein] + 3 S-adenosyl-L-methionine = N(6),N(6),N(6)-trimethyl-L-lysyl-[protein] + 3 S-adenosyl-L-homocysteine + 3 H(+). Its function is as follows. Methylates ribosomal protein L11. The chain is Ribosomal protein L11 methyltransferase from Thiobacillus denitrificans (strain ATCC 25259 / T1).